The primary structure comprises 302 residues: Sushi domain-containing protein 6 (302 aa).

Residues 1-39 (MCHGKIAPKSSSEFVVTSVGHGVFLQLVILCALLGDGLA) form the signal peptide. Residues 40–104 (SVCPLPPEPE…TPAMEVSCHL (65 aa)) form the Sushi domain. 2 cysteine pairs are disulfide-bonded: Cys42–Cys89 and Cys74–Cys102. Residues 120–140 (IVASTASSVALILLLVVLFVL) form a helical membrane-spanning segment. Disordered stretches follow at residues 202–241 (GSAP…CEAW) and 256–302 (TSSW…LKEA). Polar residues-rich tracts occupy residues 212-222 (REQQLQGQEAC), 256-267 (TSSWVAGSGSSR), and 279-290 (SDIQSLLSLTSE).

Its subcellular location is the membrane. Functionally, may play a role in growth-suppressive activity and cell death. May be involved in the production of chemokine molecules in umbilical vein endothelial cells (HUVECs) cultured in THP1 monocyte LPS-induced medium. Plays a role in preventing tumor onset. The sequence is that of Sushi domain-containing protein 6 from Mus musculus (Mouse).